The chain runs to 370 residues: Arginine kinase (370 aa).

The 84-residue stretch at 6 to 89 (QKKYPAKDDF…FDPVIEEYHN (84 aa)) folds into the Phosphagen kinase N-terminal domain. The Phosphagen kinase C-terminal domain occupies 115-358 (YVISSRVRTG…KVLIEMEKKL (244 aa)). ATP is bound by residues 118 to 122 (SSRVR) and His181. Glu222 contacts substrate. Arg226 contributes to the ATP binding site. Cys274 serves as a coordination point for substrate. Residues 283–287 (RCSVH) and 311–316 (RGTSGE) contribute to the ATP site. Glu316 lines the substrate pocket.

It belongs to the ATP:guanido phosphotransferase family. As to quaternary structure, homodimer. Post-translationally, the N-terminus is blocked.

The enzyme catalyses L-arginine + ATP = N(omega)-phospho-L-arginine + ADP + H(+). The protein is Arginine kinase (AK) of Stichopus japonicus (Sea cucumber).